The primary structure comprises 442 residues: Putative neutral sphingomyelinase (442 aa).

Residue Glu-46 coordinates Mg(2+). The Proton acceptor role is filled by His-264. Positions 309–330 (ALTGEDDQSSQHQPEIQCNGSS) are disordered. Residues 318-330 (SQHQPEIQCNGSS) are compositionally biased toward polar residues. 2 consecutive transmembrane segments (helical) span residues 362–384 (RILY…EFTA) and 391–413 (IFLL…ASIW).

This sequence belongs to the neutral sphingomyelinase family.

It localises to the membrane. It catalyses the reaction a sphingomyelin + H2O = phosphocholine + an N-acylsphing-4-enine + H(+). It participates in lipid metabolism; sphingolipid metabolism. The protein is Putative neutral sphingomyelinase of Drosophila melanogaster (Fruit fly).